We begin with the raw amino-acid sequence, 322 residues long: Acetylglutamate kinase (322 aa).

Substrate-binding positions include 85–86 (GG), Arg-107, and Asn-211.

Belongs to the acetylglutamate kinase family. ArgB subfamily.

It is found in the cytoplasm. The enzyme catalyses N-acetyl-L-glutamate + ATP = N-acetyl-L-glutamyl 5-phosphate + ADP. It functions in the pathway amino-acid biosynthesis; L-arginine biosynthesis; N(2)-acetyl-L-ornithine from L-glutamate: step 2/4. Functionally, catalyzes the ATP-dependent phosphorylation of N-acetyl-L-glutamate. In Methanosarcina barkeri (strain Fusaro / DSM 804), this protein is Acetylglutamate kinase.